Consider the following 98-residue polypeptide: NADH-ubiquinone oxidoreductase chain 4L (98 aa).

3 helical membrane passes run 2–22 (PSISINIILAFAAALLGMLMF), 28–48 (SSLLCLEGMMLSMFILSTLII), and 61–81 (IMLLVFSACEAAIGLALLVMV).

It belongs to the complex I subunit 4L family. As to quaternary structure, core subunit of respiratory chain NADH dehydrogenase (Complex I) which is composed of 45 different subunits.

Its subcellular location is the mitochondrion inner membrane. It catalyses the reaction a ubiquinone + NADH + 5 H(+)(in) = a ubiquinol + NAD(+) + 4 H(+)(out). In terms of biological role, core subunit of the mitochondrial membrane respiratory chain NADH dehydrogenase (Complex I) which catalyzes electron transfer from NADH through the respiratory chain, using ubiquinone as an electron acceptor. Part of the enzyme membrane arm which is embedded in the lipid bilayer and involved in proton translocation. In Allocebus trichotis (Hairy-eared dwarf lemur), this protein is NADH-ubiquinone oxidoreductase chain 4L (MT-ND4L).